The primary structure comprises 590 residues: Zinc finger protein 285 (590 aa).

Residues 8-86 enclose the KRAB domain; it reads VTFKDVAVVF…WKQRIRDLTV (79 aa). The C2H2-type 1 zinc finger occupies 232–254; that stretch reads FPCNNCGVAFADDTDPHVHHSTH. The C2H2-type 2; degenerate zinc finger occupies 260–282; it reads YKCDQYGKNFSQSQDLIVHCKTH. 9 consecutive C2H2-type zinc fingers follow at residues 316-338, 344-366, 372-394, 400-422, 428-450, 456-478, 484-506, 512-534, and 540-562; these read YKCK…HRVH, YKCD…QGVH, YKCE…QRVH, YKCS…WRFH, YRCG…QRVH, YKCN…QRVH, YKCE…QRDH, YKCD…LRVH, and YKCK…QRVH.

It belongs to the krueppel C2H2-type zinc-finger protein family.

The protein resides in the nucleus. May be involved in transcriptional regulation. The polypeptide is Zinc finger protein 285 (ZNF285) (Homo sapiens (Human)).